The primary structure comprises 104 residues: Protein U9 (104 aa).

The protein is Protein U9 (U9) of Homo sapiens (Human).